A 184-amino-acid polypeptide reads, in one-letter code: Probable RNA 2'-phosphotransferase (184 aa).

This sequence belongs to the KptA/TPT1 family.

Its function is as follows. Removes the 2'-phosphate from RNA via an intermediate in which the phosphate is ADP-ribosylated by NAD followed by a presumed transesterification to release the RNA and generate ADP-ribose 1''-2''-cyclic phosphate (APPR&gt;P). May function as an ADP-ribosylase. This is Probable RNA 2'-phosphotransferase from Rhizobium leguminosarum bv. trifolii (strain WSM2304).